Here is a 94-residue protein sequence, read N- to C-terminus: Co-chaperonin GroES (94 aa).

Belongs to the GroES chaperonin family. In terms of assembly, heptamer of 7 subunits arranged in a ring. Interacts with the chaperonin GroEL.

The protein resides in the cytoplasm. Its function is as follows. Together with the chaperonin GroEL, plays an essential role in assisting protein folding. The GroEL-GroES system forms a nano-cage that allows encapsulation of the non-native substrate proteins and provides a physical environment optimized to promote and accelerate protein folding. GroES binds to the apical surface of the GroEL ring, thereby capping the opening of the GroEL channel. This Parageobacillus thermoglucosidasius (Geobacillus thermoglucosidasius) protein is Co-chaperonin GroES.